Here is a 429-residue protein sequence, read N- to C-terminus: Enolase (429 aa).

Residue Gln163 coordinates (2R)-2-phosphoglycerate. The Proton donor role is filled by Glu205. Mg(2+) contacts are provided by Asp242, Glu285, and Asp312. Lys337, Arg366, Ser367, and Lys388 together coordinate (2R)-2-phosphoglycerate. Lys337 serves as the catalytic Proton acceptor.

This sequence belongs to the enolase family. The cofactor is Mg(2+).

The protein resides in the cytoplasm. The protein localises to the secreted. It localises to the cell surface. It carries out the reaction (2R)-2-phosphoglycerate = phosphoenolpyruvate + H2O. Its pathway is carbohydrate degradation; glycolysis; pyruvate from D-glyceraldehyde 3-phosphate: step 4/5. Functionally, catalyzes the reversible conversion of 2-phosphoglycerate (2-PG) into phosphoenolpyruvate (PEP). It is essential for the degradation of carbohydrates via glycolysis. The polypeptide is Enolase (Azoarcus sp. (strain BH72)).